A 396-amino-acid polypeptide reads, in one-letter code: Tryptophan synthase beta chain (396 aa).

The residue at position 88 (lysine 88) is an N6-(pyridoxal phosphate)lysine.

Belongs to the TrpB family. As to quaternary structure, tetramer of two alpha and two beta chains. It depends on pyridoxal 5'-phosphate as a cofactor.

The catalysed reaction is (1S,2R)-1-C-(indol-3-yl)glycerol 3-phosphate + L-serine = D-glyceraldehyde 3-phosphate + L-tryptophan + H2O. The protein operates within amino-acid biosynthesis; L-tryptophan biosynthesis; L-tryptophan from chorismate: step 5/5. In terms of biological role, the beta subunit is responsible for the synthesis of L-tryptophan from indole and L-serine. The chain is Tryptophan synthase beta chain from Actinobacillus pleuropneumoniae serotype 3 (strain JL03).